The chain runs to 652 residues: DNA polymerase epsilon subunit B (652 aa).

This sequence belongs to the DNA polymerase epsilon subunit B family. In terms of assembly, heterotetramer. Consists of four subunits: POL2, DPB2, DPB3 and DPB4.

The protein resides in the nucleus. In terms of biological role, as accessory component of the DNA polymerase epsilon (DNA polymerase II) participates in chromosomal DNA replication. The sequence is that of DNA polymerase epsilon subunit B (DPB2) from Yarrowia lipolytica (strain CLIB 122 / E 150) (Yeast).